The following is a 377-amino-acid chain: Succinyl-diaminopimelate desuccinylase (377 aa).

Histidine 67 is a binding site for Zn(2+). Residue aspartate 69 is part of the active site. Aspartate 100 lines the Zn(2+) pocket. The Proton acceptor role is filled by glutamate 134. Zn(2+) contacts are provided by glutamate 135, glutamate 163, and histidine 349.

This sequence belongs to the peptidase M20A family. DapE subfamily. As to quaternary structure, homodimer. Requires Zn(2+) as cofactor. It depends on Co(2+) as a cofactor.

It catalyses the reaction N-succinyl-(2S,6S)-2,6-diaminopimelate + H2O = (2S,6S)-2,6-diaminopimelate + succinate. The protein operates within amino-acid biosynthesis; L-lysine biosynthesis via DAP pathway; LL-2,6-diaminopimelate from (S)-tetrahydrodipicolinate (succinylase route): step 3/3. In terms of biological role, catalyzes the hydrolysis of N-succinyl-L,L-diaminopimelic acid (SDAP), forming succinate and LL-2,6-diaminopimelate (DAP), an intermediate involved in the bacterial biosynthesis of lysine and meso-diaminopimelic acid, an essential component of bacterial cell walls. The protein is Succinyl-diaminopimelate desuccinylase of Haemophilus influenzae (strain 86-028NP).